Here is a 670-residue protein sequence, read N- to C-terminus: MSDETTISLEDGYPPLEALTTMVPPADATGFSQSLLTFAAVMTFLIMIVGICGNLLTVVALLKCPKVRNVAAAFIISLCIADLLFCALVLPFQGLRFVQGTWRHGQVLCRLIPFIQYGNIGVSLLCIAMITINRYVMITHHGLYARIYKRHWIAVMIAACWLFSYGMQLPTLLGEWGRFGYDSRLQTCSIMTDDHGHSSKTTLFITAFVIPCLVIIACYAKIFWVVHKSEQRLKRHATKQNSIPNNLRPLASTGSGALPSGAECQPSNRVSSDSSSSFSIDVPETAPSGKQQPTRVKDQREVRAKRNEWRITKMVLAIFLSFVVCYLPITIVKVADKNVEHPSLHICSYILLYLSACINPIIYVIMNKQYRKAYKTVVFCQPARLLLPFGKTNGASSAAEKWKDTGLSNNHSRTIVSQMSGGTGAASGAGTATGTAAVAVMQTPPEVQQAQALEMVSRGPDLISKSNLPQPNVTPPPPSVLTATPNGSNSNSLTLRLPLKKNNHCYTNSGFNSSTPSPSSGLGIGISSSSIYRPGVGSLGSGSASIRRITMVGDDIILEEEELPPTPPATSAPTTPAPPPPSSPLHPLSTDSSTTTISGGAVVAGSSAPKPATPTPHIYMNVDSPKRNQYYMDRNTNAVAPESDSGPANTSATVSISGSKLTAKMKFPKD.

The Extracellular segment spans residues Met1–Ala40. The helical transmembrane segment at Val41 to Leu61 threads the bilayer. At Leu62–Asn69 the chain is on the cytoplasmic side. Residues Val70–Leu90 traverse the membrane as a helical segment. The Extracellular portion of the chain corresponds to Pro91 to Leu111. A disulfide bond links Cys109 and Cys188. The helical transmembrane segment at Ile112–Ile132 threads the bilayer. Residues Asn133 to Trp152 are Cytoplasmic-facing. A helical transmembrane segment spans residues Ile153–Leu173. Over Gly174–Thr202 the chain is Extracellular. The helical transmembrane segment at Leu203 to Phe223 threads the bilayer. Residues Trp224–Lys313 are Cytoplasmic-facing. The tract at residues Leu258–Val302 is disordered. Positions Ser267–Ser279 are enriched in low complexity. The helical transmembrane segment at Met314–Val334 threads the bilayer. Topologically, residues Ala335–His345 are extracellular. Residues Ile346–Met366 traverse the membrane as a helical segment. Topologically, residues Asn367–Asp670 are cytoplasmic. Disordered regions lie at residues Asp461–Ser490, Glu562–Val622, and Thr636–Asp670. Over residues Pro564–Pro584 the composition is skewed to pro residues. A compositionally biased stretch (low complexity) spans Leu585 to Ser598. Residues Gly646–Lys660 show a composition bias toward polar residues.

Belongs to the G-protein coupled receptor 1 family. Isoform A and isoform B are expressed in the head. Isoform B only is expressed in the body. Expressed in embryonic glial cells that are involved in ensheathment and insulation of the nervous system. Both isoforms are expressed in glia that insulate the larval and adult nervous system. Also expressed in the germ cells, the gut, and the heart.

The protein resides in the cell membrane. In terms of biological role, isoform A and isoform B are required in glia to regulate the acute sensitivity to cocaine and to continuously maintain the proper blood-brain barrier (BBB) function. A moody-mediated signaling pathway functions in glia to regulate nervous system insulation and drug-related behaviors. Galphai and Galphao, and the regulator of G protein signaling, loco, are required in the surface glia to achieve effective insulation. The components function by regulating the cortical actin and thereby stabilizing the extended morphology of the surface glia, which in turn is necessary for the formation of septate junctions of sufficient length to achieve proper sealing of the nerve cord. In Drosophila melanogaster (Fruit fly), this protein is G-protein coupled receptor moody.